Reading from the N-terminus, the 631-residue chain is RING finger protein 112 (631 aa).

An RING-type zinc finger spans residues 57–98; it reads CSICLERLREPISLDCGHDFCIRCFSTHRIPGCELPCCPECR. Positions 131–631 are interaction with ZBTB16; sequence AVRAERLLLV…GDREPLLQEE (501 aa). One can recognise a GB1/RHD3-type G domain in the interval 166–397; it reads DTPVCLLAVL…YISDVLSTAP (232 aa). Residue 317-318 coordinates GTP; it reads RD. 2 helical membrane-spanning segments follow: residues 547–567 and 580–600; these read LAAV…GVVG and GMVA…GGGV.

It belongs to the TRAFAC class dynamin-like GTPase superfamily. GB1/RHD3 GTPase family. GB1 subfamily. As to quaternary structure, self-associates. Interacts with SP1 in an oxidative stress-regulated manner. Interacts with SIGMAR1 in an oxidative stress-regulated manner. Interacts with ZBTB16 (via C2H2-type zinc finger domains 1 and 2). In terms of processing, auto-ubiquitinated. Predominantly expressed in brain.

It is found in the membrane. Its subcellular location is the cytoplasm. The protein resides in the nucleus. It localises to the nuclear body. The protein localises to the nucleoplasm. It is found in the endosome. Its subcellular location is the cytoplasmic vesicle. The protein resides in the secretory vesicle. It localises to the synaptic vesicle. The protein localises to the postsynaptic density. It is found in the perikaryon. Its subcellular location is the cell projection. The protein resides in the neuron projection. It catalyses the reaction S-ubiquitinyl-[E2 ubiquitin-conjugating enzyme]-L-cysteine + [acceptor protein]-L-lysine = [E2 ubiquitin-conjugating enzyme]-L-cysteine + N(6)-ubiquitinyl-[acceptor protein]-L-lysine.. It functions in the pathway protein modification; protein ubiquitination. Functionally, E3 ubiquitin-protein ligase that plays an important role in neuronal differentiation, including neurogenesis and gliogenesis, during brain development. During embryonic development initiates neuronal differentiation by inducing cell cycle arrest at the G0/G1 phase through up-regulation of cell-cycle regulatory proteins. Plays a role not only in the fetal period during the development of the nervous system, but also in the adult brain, where it is involved in the maintenance of neural functions and protection of the nervous tissue cells from oxidative stress-induced damage. Exhibits GTPase and E3 ubiquitin-protein ligase activities. Regulates dendritic spine density and synaptic neurotransmission; its ability to hydrolyze GTP is involved in the maintenance of dendritic spine density. This Rattus norvegicus (Rat) protein is RING finger protein 112 (Rnf112).